The following is a 408-amino-acid chain: Phosphoglycerate kinase (408 aa).

Residues 24-26 (DLN), arginine 39, 62-65 (HLGR), arginine 121, and arginine 161 contribute to the substrate site. Residues lysine 211, glycine 307, glutamate 338, and 364–367 (GGDS) each bind ATP.

The protein belongs to the phosphoglycerate kinase family. Monomer.

It is found in the cytoplasm. The enzyme catalyses (2R)-3-phosphoglycerate + ATP = (2R)-3-phospho-glyceroyl phosphate + ADP. The protein operates within carbohydrate degradation; glycolysis; pyruvate from D-glyceraldehyde 3-phosphate: step 2/5. In Pseudarthrobacter chlorophenolicus (strain ATCC 700700 / DSM 12829 / CIP 107037 / JCM 12360 / KCTC 9906 / NCIMB 13794 / A6) (Arthrobacter chlorophenolicus), this protein is Phosphoglycerate kinase.